The chain runs to 80 residues: uncharacterized protein (80 aa).

Transmembrane regions (helical) follow at residues 2-22 (INLW…IGQV), 32-52 (FFGM…LTGG), and 55-75 (LVTG…RFMV).

Its subcellular location is the cell membrane. This is an uncharacterized protein from Escherichia coli (strain K12).